The sequence spans 515 residues: Bifunctional purine biosynthesis protein PurH (515 aa).

Residues 1–145 (MTKRALISVS…KNHASVTVVV (145 aa)) enclose the MGS-like domain.

Belongs to the PurH family.

It carries out the reaction (6R)-10-formyltetrahydrofolate + 5-amino-1-(5-phospho-beta-D-ribosyl)imidazole-4-carboxamide = 5-formamido-1-(5-phospho-D-ribosyl)imidazole-4-carboxamide + (6S)-5,6,7,8-tetrahydrofolate. It catalyses the reaction IMP + H2O = 5-formamido-1-(5-phospho-D-ribosyl)imidazole-4-carboxamide. It functions in the pathway purine metabolism; IMP biosynthesis via de novo pathway; 5-formamido-1-(5-phospho-D-ribosyl)imidazole-4-carboxamide from 5-amino-1-(5-phospho-D-ribosyl)imidazole-4-carboxamide (10-formyl THF route): step 1/1. Its pathway is purine metabolism; IMP biosynthesis via de novo pathway; IMP from 5-formamido-1-(5-phospho-D-ribosyl)imidazole-4-carboxamide: step 1/1. In Streptococcus thermophilus (strain ATCC BAA-491 / LMD-9), this protein is Bifunctional purine biosynthesis protein PurH.